The chain runs to 352 residues: S-adenosylmethionine:tRNA ribosyltransferase-isomerase (352 aa).

It belongs to the QueA family. In terms of assembly, monomer.

Its subcellular location is the cytoplasm. It carries out the reaction 7-aminomethyl-7-carbaguanosine(34) in tRNA + S-adenosyl-L-methionine = epoxyqueuosine(34) in tRNA + adenine + L-methionine + 2 H(+). The protein operates within tRNA modification; tRNA-queuosine biosynthesis. Its function is as follows. Transfers and isomerizes the ribose moiety from AdoMet to the 7-aminomethyl group of 7-deazaguanine (preQ1-tRNA) to give epoxyqueuosine (oQ-tRNA). The polypeptide is S-adenosylmethionine:tRNA ribosyltransferase-isomerase (Solibacter usitatus (strain Ellin6076)).